Consider the following 178-residue polypeptide: Putative pre-16S rRNA nuclease (178 aa).

Basic and acidic residues-rich tracts occupy residues 1-18 (MDHA…DPGR) and 50-60 (PRSKDRGPDAP). 2 disordered regions span residues 1-23 (MDHA…RRIG) and 36-60 (SDPD…PDAP).

This sequence belongs to the YqgF nuclease family.

Its subcellular location is the cytoplasm. Its function is as follows. Could be a nuclease involved in processing of the 5'-end of pre-16S rRNA. This is Putative pre-16S rRNA nuclease from Rhodococcus opacus (strain B4).